The following is a 156-amino-acid chain: ATP synthase subunit b (156 aa).

The helical transmembrane segment at 7–27 threads the bilayer; that stretch reads LIGQTVAFIIFVWFCMKFVWP.

The protein belongs to the ATPase B chain family. In terms of assembly, F-type ATPases have 2 components, F(1) - the catalytic core - and F(0) - the membrane proton channel. F(1) has five subunits: alpha(3), beta(3), gamma(1), delta(1), epsilon(1). F(0) has three main subunits: a(1), b(2) and c(10-14). The alpha and beta chains form an alternating ring which encloses part of the gamma chain. F(1) is attached to F(0) by a central stalk formed by the gamma and epsilon chains, while a peripheral stalk is formed by the delta and b chains.

The protein resides in the cell inner membrane. F(1)F(0) ATP synthase produces ATP from ADP in the presence of a proton or sodium gradient. F-type ATPases consist of two structural domains, F(1) containing the extramembraneous catalytic core and F(0) containing the membrane proton channel, linked together by a central stalk and a peripheral stalk. During catalysis, ATP synthesis in the catalytic domain of F(1) is coupled via a rotary mechanism of the central stalk subunits to proton translocation. In terms of biological role, component of the F(0) channel, it forms part of the peripheral stalk, linking F(1) to F(0). The polypeptide is ATP synthase subunit b (Shewanella sp. (strain MR-4)).